Consider the following 205-residue polypeptide: Holliday junction branch migration complex subunit RuvA (205 aa).

The interval 1-68 (MIGYLEGTLL…QPKPVLIGFN (68 aa)) is domain I. The domain II stretch occupies residues 69-146 (TEEEKDFFHL…RFADAGHSSA (78 aa)). The flexible linker stretch occupies residues 147 to 151 (PDVPV). The segment at 152–205 (TGSLADQTVEVLVGQLGYKPNEARLMVAGALKRNPDVSTPEALFDEIFKHGQAQ) is domain III.

It belongs to the RuvA family. Homotetramer. Forms an RuvA(8)-RuvB(12)-Holliday junction (HJ) complex. HJ DNA is sandwiched between 2 RuvA tetramers; dsDNA enters through RuvA and exits via RuvB. An RuvB hexamer assembles on each DNA strand where it exits the tetramer. Each RuvB hexamer is contacted by two RuvA subunits (via domain III) on 2 adjacent RuvB subunits; this complex drives branch migration. In the full resolvosome a probable DNA-RuvA(4)-RuvB(12)-RuvC(2) complex forms which resolves the HJ.

The protein localises to the cytoplasm. The RuvA-RuvB-RuvC complex processes Holliday junction (HJ) DNA during genetic recombination and DNA repair, while the RuvA-RuvB complex plays an important role in the rescue of blocked DNA replication forks via replication fork reversal (RFR). RuvA specifically binds to HJ cruciform DNA, conferring on it an open structure. The RuvB hexamer acts as an ATP-dependent pump, pulling dsDNA into and through the RuvAB complex. HJ branch migration allows RuvC to scan DNA until it finds its consensus sequence, where it cleaves and resolves the cruciform DNA. This chain is Holliday junction branch migration complex subunit RuvA, found in Desulfosudis oleivorans (strain DSM 6200 / JCM 39069 / Hxd3) (Desulfococcus oleovorans).